The primary structure comprises 66 residues: MLELRAKQIRQMSKEERQQTLKNLKESLLHERALVSMGGSSPSPGKVRSIRRQIARLLTVEREEKK.

Belongs to the universal ribosomal protein uL29 family.

This Thermoplasma volcanium (strain ATCC 51530 / DSM 4299 / JCM 9571 / NBRC 15438 / GSS1) protein is Large ribosomal subunit protein uL29.